We begin with the raw amino-acid sequence, 155 residues long: Arginine repressor (155 aa).

The protein belongs to the ArgR family.

The protein resides in the cytoplasm. Its pathway is amino-acid biosynthesis; L-arginine biosynthesis [regulation]. In terms of biological role, regulates arginine biosynthesis genes. This chain is Arginine repressor, found in Histophilus somni (strain 2336) (Haemophilus somnus).